Reading from the N-terminus, the 101-residue chain is Large ribosomal subunit protein uL24 (101 aa).

This sequence belongs to the universal ribosomal protein uL24 family. Part of the 50S ribosomal subunit.

In terms of biological role, one of two assembly initiator proteins, it binds directly to the 5'-end of the 23S rRNA, where it nucleates assembly of the 50S subunit. One of the proteins that surrounds the polypeptide exit tunnel on the outside of the subunit. In Elusimicrobium minutum (strain Pei191), this protein is Large ribosomal subunit protein uL24.